The chain runs to 147 residues: Lysozyme C (147 aa).

Residues 1 to 18 (MRSLLVLVLCFLPLAALG) form the signal peptide. Positions 19–147 (KVYGRCELAA…VNAWIRGCRL (129 aa)) constitute a C-type lysozyme domain. Disulfide bonds link Cys24/Cys145, Cys48/Cys133, Cys82/Cys98, and Cys94/Cys112. Catalysis depends on residues Glu53 and Asp70.

Belongs to the glycosyl hydrolase 22 family. As to quaternary structure, monomer.

It is found in the secreted. It catalyses the reaction Hydrolysis of (1-&gt;4)-beta-linkages between N-acetylmuramic acid and N-acetyl-D-glucosamine residues in a peptidoglycan and between N-acetyl-D-glucosamine residues in chitodextrins.. Its function is as follows. Lysozymes have primarily a bacteriolytic function; those in tissues and body fluids are associated with the monocyte-macrophage system and enhance the activity of immunoagents. The sequence is that of Lysozyme C (LYZ) from Coturnix japonica (Japanese quail).